The chain runs to 314 residues: ATP synthase gamma chain (314 aa).

Belongs to the ATPase gamma chain family. In terms of assembly, F-type ATPases have 2 components, CF(1) - the catalytic core - and CF(0) - the membrane proton channel. CF(1) has five subunits: alpha(3), beta(3), gamma(1), delta(1), epsilon(1). CF(0) has three main subunits: a, b and c.

Its subcellular location is the cellular thylakoid membrane. Produces ATP from ADP in the presence of a proton gradient across the membrane. The gamma chain is believed to be important in regulating ATPase activity and the flow of protons through the CF(0) complex. This Gloeothece citriformis (strain PCC 7424) (Cyanothece sp. (strain PCC 7424)) protein is ATP synthase gamma chain.